Here is a 291-residue protein sequence, read N- to C-terminus: Cell division protein FtsX (291 aa).

Residues 1 to 18 (MSSNFDKFQKRRLISSYF) are Cytoplasmic-facing. Residues 19 to 39 (SVVLSVFLVLFLLGVLGLFII) traverse the membrane as a helical segment. Residues 40–162 (NSKKLADDFK…VNLVNDNIKK (123 aa)) are Periplasmic-facing. Residues 163–183 (VSMWILIISGFLTVIAVLLIN) form a helical membrane-spanning segment. Residues 184 to 220 (SSLRLSIHSNRFIIKTMQMVGATKSFIRKPFVMRSVK) are Cytoplasmic-facing. A helical membrane pass occupies residues 221–241 (LGMLGALLAIIALIGLLFYVE). Topologically, residues 242–253 (TNFPGLGILEDK) are periplasmic. Residues 254-274 (ALIGLVLLAVFGLGVLITWVS) traverse the membrane as a helical segment. Over 275 to 291 (THFATQRFLNLRTDDLY) the chain is Cytoplasmic.

This sequence belongs to the ABC-4 integral membrane protein family. FtsX subfamily.

The protein localises to the cell inner membrane. Functionally, required for cell division and gliding motility. This is Cell division protein FtsX from Flavobacterium johnsoniae (strain ATCC 17061 / DSM 2064 / JCM 8514 / BCRC 14874 / CCUG 350202 / NBRC 14942 / NCIMB 11054 / UW101) (Cytophaga johnsonae).